Consider the following 140-residue polypeptide: Truncated tyrosine phosphatase D1 (140 aa).

In terms of domain architecture, Tyrosine-protein phosphatase spans methionine 1–lysine 140.

It belongs to the protein-tyrosine phosphatase family.

The protein is Truncated tyrosine phosphatase D1 (D1) of Microplitis demolitor bracovirus (isolate Webb) (MdBV).